The chain runs to 420 residues: Innexin-3 (420 aa).

4 consecutive transmembrane segments (helical) span residues 33–53, 104–124, 193–213, and 278–298; these read ATLLAFFSIMVSCKQYVGSAI, WVPIVLAIQAFMFYLPSWIWS, MLYICIKLMYLANVFVQFIIL, and IYLFIWFWFVFVLITTFINTL. Residues 378–405 are disordered; that stretch reads NRDFHHGHSTKSTSPGLEEGHHEHLYTP. Basic and acidic residues predominate over residues 395–405; it reads EEGHHEHLYTP.

Belongs to the pannexin family. In terms of assembly, interacts with F-actin. As to expression, evenly distributed along the adjoining membranes of the two pm5 pharyngeal muscle cells.

The protein resides in the cell membrane. The protein localises to the cell junction. It localises to the gap junction. Functionally, structural component of gap junctions. Plays a role in maintaining gap junction activity to promote phayngeal muscle contraction. The sequence is that of Innexin-3 from Caenorhabditis elegans.